The following is an 873-amino-acid chain: Envelope glycoprotein B (873 aa).

The signal sequence occupies residues 1–21; sequence MASLKMLICVCVAILIPSTLS. Residues 22–740 lie on the Virion surface side of the membrane; the sequence is QDSHGIAGII…SGIASFLSNP (719 aa). 5 cysteine pairs are disulfide-bonded: C67-C525, C84-C481, C157-C219, C311-C359, and C548-C598. N-linked (GlcNAc...) asparagine; by host glycans are attached at residues N92 and N111. The segment at 124-130 is involved in fusion and/or binding to host membrane; sequence TWALFSR. N-linked (GlcNAc...) asparagine; by host glycosylation is present at N201. The segment at 206-213 is involved in fusion and/or binding to host membrane; sequence HQTLGYRT. N252 and N350 each carry an N-linked (GlcNAc...) asparagine; by host glycan. The disordered stretch occupies residues 418 to 447; it reads QNHLPRGRERRQAAGRRTASLQSGPQGDRI. Residues N569, N625, and N639 are each glycosylated (N-linked (GlcNAc...) asparagine; by host). Hydrophobic membrane proximal region stretches follow at residues 684–738 and 715–734; these read IDTV…SFLS and LGTV…SGIA. Residues 741–761 form a helical membrane-spanning segment; that stretch reads FAALGIGIAVVVSIILGLLAF. Over 762–873 the chain is Intravirion; sequence KYVMNLKSNP…PSWAEESEDE (112 aa). The segment at 781-807 is disordered; it reads PPAGTPPRPSRRYYKDEEEVEEDSDED. Residues 796-807 are compositionally biased toward acidic residues; it reads DEEEVEEDSDED. Positions 858–861 match the Internalization motif motif; it reads YPLL.

Belongs to the herpesviridae glycoprotein B family. As to quaternary structure, homotrimer; disulfide-linked. Binds to heparan sulfate proteoglycans. Interacts with gH/gL heterodimer. A proteolytic cleavage by host furin generates two subunits that remain linked by disulfide bonds.

The protein resides in the virion membrane. It localises to the host cell membrane. It is found in the host endosome membrane. Its subcellular location is the host Golgi apparatus membrane. In terms of biological role, envelope glycoprotein that forms spikes at the surface of virion envelope. Essential for the initial attachment to heparan sulfate moieties of the host cell surface proteoglycans. Involved in fusion of viral and cellular membranes leading to virus entry into the host cell. Following initial binding to its host receptors, membrane fusion is mediated by the fusion machinery composed at least of gB and the heterodimer gH/gL. May be involved in the fusion between the virion envelope and the outer nuclear membrane during virion egress. This Infectious laryngotracheitis virus (strain 632) (ILTV) protein is Envelope glycoprotein B.